The primary structure comprises 517 residues: Crotonobetaine/carnitine--CoA ligase (517 aa).

It belongs to the ATP-dependent AMP-binding enzyme family.

It catalyses the reaction 4-(trimethylamino)butanoate + ATP + CoA = 4-(trimethylamino)butanoyl-CoA + AMP + diphosphate. The catalysed reaction is crotonobetaine + ATP + CoA = crotonobetainyl-CoA + AMP + diphosphate. It carries out the reaction (R)-carnitine + ATP + CoA = (R)-carnitinyl-CoA + AMP + diphosphate. It participates in amine and polyamine metabolism; carnitine metabolism. In terms of biological role, catalyzes the transfer of CoA to carnitine, generating the initial carnitinyl-CoA needed for the CaiB reaction cycle. Also has activity toward crotonobetaine and gamma-butyrobetaine. The sequence is that of Crotonobetaine/carnitine--CoA ligase from Escherichia fergusonii (strain ATCC 35469 / DSM 13698 / CCUG 18766 / IAM 14443 / JCM 21226 / LMG 7866 / NBRC 102419 / NCTC 12128 / CDC 0568-73).